Here is a 98-residue protein sequence, read N- to C-terminus: Putative defensin-like protein 233 (98 aa).

Positions 1–28 are cleaved as a signal peptide; the sequence is MGMWCTTLFMVSCVSICLILSHVQEVEA. 4 disulfide bridges follow: C35–C96, C45–C70, C53–C86, and C68–C88.

It belongs to the DEFL family. In terms of tissue distribution, expressed at least in stem, root, rosette leaves and flower buds.

It is found in the secreted. The polypeptide is Putative defensin-like protein 233 (SCRL22) (Arabidopsis thaliana (Mouse-ear cress)).